Reading from the N-terminus, the 620-residue chain is Nuclear cap-binding protein subunit 3 (620 aa).

Residue Lys12 forms a Glycyl lysine isopeptide (Lys-Gly) (interchain with G-Cter in SUMO2) linkage. Over residues Ala15–Ala28 the composition is skewed to low complexity. A disordered region spans residues Ala15–Val42. Ser25 carries the phosphoserine modification. Lys70 is covalently cross-linked (Glycyl lysine isopeptide (Lys-Gly) (interchain with G-Cter in SUMO2)). Ser73 bears the Phosphoserine mark. Positions Glu126–Ile187 are RNA recognition motif (RRM) domain. The short motif at Trp155–Asp158 is the WLDD motif; essential for 7-methylguanosine-containing mRNA cap binding element. Basic and acidic residues predominate over residues Asp185–Ala198. 3 disordered regions span residues Asp185–Leu233, His332–Ser419, and Ile436–Ser620. Residue Lys186 forms a Glycyl lysine isopeptide (Lys-Gly) (interchain with G-Cter in SUMO2) linkage. Residues Ser209 and Ser210 each carry the phosphoserine modification. Composition is skewed to acidic residues over residues Ser209–Leu230 and Glu341–Ala365. The span at Asp366–Ala388 shows a compositional bias: basic and acidic residues. Thr413 carries the phosphothreonine modification. Phosphoserine is present on Ser415. Composition is skewed to basic and acidic residues over residues Pro459 to Arg474 and Val511 to Ser521. Lys541 is covalently cross-linked (Glycyl lysine isopeptide (Lys-Gly) (interchain with G-Cter in SUMO2)). Basic and acidic residues-rich tracts occupy residues Lys554–Gly569 and Ile585–Leu598. Over residues Glu611–Ser620 the composition is skewed to low complexity. A Phosphoserine modification is found at Ser620.

This sequence belongs to the NCBP3 family. As to quaternary structure, component of an alternative cap-binding complex (CBC) composed of NCBP1/CBP80 and NCBP3. Interacts with SRRT, KPNA3, THOC5 and EIF4A3.

The protein resides in the nucleus. Its subcellular location is the cytoplasm. In terms of biological role, associates with NCBP1/CBP80 to form an alternative cap-binding complex (CBC) which plays a key role in mRNA export. NCBP3 serves as adapter protein linking the capped RNAs (m7GpppG-capped RNA) to NCBP1/CBP80. Unlike the conventional CBC with NCBP2 which binds both small nuclear RNA (snRNA) and messenger (mRNA) and is involved in their export from the nucleus, the alternative CBC with NCBP3 does not bind snRNA and associates only with mRNA thereby playing a role in only mRNA export. The alternative CBC is particularly important in cellular stress situations such as virus infections and the NCBP3 activity is critical to inhibit virus growth. The protein is Nuclear cap-binding protein subunit 3 of Homo sapiens (Human).